Here is a 76-residue protein sequence, read N- to C-terminus: Small ribosomal subunit protein bS16c (76 aa).

It belongs to the bacterial ribosomal protein bS16 family.

The protein resides in the plastid. It localises to the chloroplast. This is Small ribosomal subunit protein bS16c from Guillardia theta (Cryptophyte).